A 516-amino-acid chain; its full sequence is Putative transposase y4bL/y4kJ/y4tB (516 aa).

The 82-residue stretch at Ile15 to Leu96 folds into the HTH IS408-type domain. The region spanning Phe138–Glu319 is the Integrase catalytic domain. The segment at Glu493–Gln516 is disordered.

It belongs to the transposase IS21/IS408/IS1162 family.

This is Putative transposase y4bL/y4kJ/y4tB from Sinorhizobium fredii (strain NBRC 101917 / NGR234).